A 369-amino-acid chain; its full sequence is Caffeine synthase 1 (369 aa).

Residue tyrosine 24 coordinates S-adenosyl-L-homocysteine. Threonine 31 serves as a coordination point for caffeine. Positions 66, 71, 103, 104, 138, and 139 each coordinate S-adenosyl-L-homocysteine. Residues tyrosine 156, histidine 159, and tryptophan 160 each coordinate caffeine. Position 177 (asparagine 177) interacts with Mg(2+). Caffeine is bound at residue arginine 225. 3 residues coordinate Mg(2+): aspartate 263, phenylalanine 265, and asparagine 266. A caffeine-binding site is contributed by phenylalanine 321.

The protein belongs to the methyltransferase superfamily. Type-7 methyltransferase family. Mg(2+) serves as cofactor.

The catalysed reaction is theobromine + S-adenosyl-L-methionine = caffeine + S-adenosyl-L-homocysteine + H(+). The enzyme catalyses 7-methylxanthine + S-adenosyl-L-methionine = theobromine + S-adenosyl-L-homocysteine + H(+). Its pathway is alkaloid biosynthesis. Its function is as follows. Involved in the biosynthesis of caffeine. Catalyzes the conversion of 7-methylxanthine (7mX) to theobromine and of theobromine to caffeine. The chain is Caffeine synthase 1 from Camellia taliensis (Wild tea).